A 27-amino-acid chain; its full sequence is MLIYYLQSEKVLFFLYIFLLNFKLRIL.

It localises to the plastid. The protein localises to the cyanelle. This is an uncharacterized protein from Cyanophora paradoxa.